Reading from the N-terminus, the 123-residue chain is Modulator protein MzrA (123 aa).

Over 1 to 8 (MIKRPRWQ) the chain is Cytoplasmic. Residues 9 to 29 (YVLLIALALLALATLLVPCMV) traverse the membrane as a helical segment. Residues 30–123 (RTESELRIRA…EFARAPLNLG (94 aa)) lie on the Periplasmic side of the membrane.

Belongs to the MzrA family. Interacts with EnvZ.

The protein localises to the cell inner membrane. Functionally, modulates the activity of the EnvZ/OmpR two-component regulatory system, probably by directly modulating EnvZ enzymatic activity and increasing stability of phosphorylated OmpR. In Serratia proteamaculans (strain 568), this protein is Modulator protein MzrA.